The following is a 285-amino-acid chain: HTH-type transcriptional activator AmpR (285 aa).

The HTH lysR-type domain occupies 5 to 62 (LPLNALRAFEASARHLSFTRAALELCVTQAAVSQQVRILEDRLNRVLFKRLPRGLEMT). The H-T-H motif DNA-binding region spans 22–41 (FTRAALELCVTQAAVSQQVR).

The protein belongs to the LysR transcriptional regulatory family.

Its subcellular location is the cytoplasm. Its function is as follows. This protein is a positive regulator of gene expression of beta-lactamase (AmpC). This Citrobacter koseri (Citrobacter diversus) protein is HTH-type transcriptional activator AmpR (ampR).